The following is a 201-amino-acid chain: NADH-quinone oxidoreductase subunit B 1 (201 aa).

The [4Fe-4S] cluster site is built by C80, C81, C145, and C175.

This sequence belongs to the complex I 20 kDa subunit family. As to quaternary structure, NDH-1 is composed of 14 different subunits. Subunits NuoB, C, D, E, F, and G constitute the peripheral sector of the complex. [4Fe-4S] cluster is required as a cofactor.

The protein resides in the cell inner membrane. It carries out the reaction a quinone + NADH + 5 H(+)(in) = a quinol + NAD(+) + 4 H(+)(out). Its function is as follows. NDH-1 shuttles electrons from NADH, via FMN and iron-sulfur (Fe-S) centers, to quinones in the respiratory chain. The immediate electron acceptor for the enzyme in this species is believed to be ubiquinone. Couples the redox reaction to proton translocation (for every two electrons transferred, four hydrogen ions are translocated across the cytoplasmic membrane), and thus conserves the redox energy in a proton gradient. The chain is NADH-quinone oxidoreductase subunit B 1 from Rhodopseudomonas palustris (strain BisB18).